We begin with the raw amino-acid sequence, 182 residues long: R-phycoerythrin subunit beta (182 aa).

Residue C82 participates in (2R,3E)-phycoerythrobilin binding.

Belongs to the phycobiliprotein family. As to quaternary structure, homodimer. Contains one covalently linked phycoerythrobilin chromophore.

Green-light absorbing phycoerythrin of unknown function. This chain is R-phycoerythrin subunit beta (cpeB), found in Prochlorococcus marinus (strain SARG / CCMP1375 / SS120).